Consider the following 503-residue polypeptide: Maturase K (503 aa).

Belongs to the intron maturase 2 family. MatK subfamily.

The protein localises to the plastid. It is found in the chloroplast. In terms of biological role, usually encoded in the trnK tRNA gene intron. Probably assists in splicing its own and other chloroplast group II introns. The protein is Maturase K of Vicia villosa (Hairy vetch).